The chain runs to 107 residues: Cell division protein FtsB (107 aa).

Over 1 to 3 (MGK) the chain is Cytoplasmic. The chain crosses the membrane as a helical span at residues 4 to 21 (LTLLLLILLGWLQYSLWL). Residues 22 to 107 (GKNGVHDFVR…IPSTQNNAQQ (86 aa)) lie on the Periplasmic side of the membrane. Residues 39–62 (QEVNNGKLKARNDQLFAEIDDLNG) adopt a coiled-coil conformation.

It belongs to the FtsB family. In terms of assembly, part of a complex composed of FtsB, FtsL and FtsQ.

Its subcellular location is the cell inner membrane. In terms of biological role, essential cell division protein. May link together the upstream cell division proteins, which are predominantly cytoplasmic, with the downstream cell division proteins, which are predominantly periplasmic. This chain is Cell division protein FtsB, found in Yersinia enterocolitica serotype O:8 / biotype 1B (strain NCTC 13174 / 8081).